The following is a 730-amino-acid chain: Neuroligin-like protein glit-1 (730 aa).

The first 18 residues, 1–18 (MFTGTIFNSLFTLPLVIS), serve as a signal peptide directing secretion. Over 19–663 (QFVPPPTRPV…EIMVFKWITG (645 aa)) the chain is Extracellular. N103, N320, N445, N512, N557, N564, and N604 each carry an N-linked (GlcNAc...) asparagine glycan. A helical transmembrane segment spans residues 664 to 684 (VNVIIIALLIVLAGAFGYMVW). The Cytoplasmic segment spans residues 685-730 (GNKEDEEAAYKAENHQLVEYRDTGHSVSDATISSRTRSPRSRITNL).

Belongs to the type-B carboxylesterase/lipase family. As to expression, expressed in the pharynx, intestine, and in several cells in the head including dopaminergic neurons.

It localises to the cell membrane. Probable neuronal cell surface protein thought to be involved in cell-cell-interactions. Confers protection against oxidative stress. Plays a role in protecting dopaminergic neurons against oxidative stress-induced neurodegeneration. The sequence is that of Neuroligin-like protein glit-1 from Caenorhabditis elegans.